Reading from the N-terminus, the 1707-residue chain is MANGNFKLSQLLNVDEMSAEQRSHFFDLMLTKPDCEIGQMMQRVVVDKVDDMIRERKTKDPVIVHEVLSQKEQNKLMEIYPEFNIVFKDDKNMVHGFAAAERKLQALLLLDRVPALQEVDDIGGQWSFWVTRGEKRIHSCCPNLDIRDDQREISRQIFLTAIGDQARSGKRQMSENELWMYDQFRKNIAAPNAVRCNNTYQGCTCRGFSDGKKKGAQYAIALHSLYDFKLKDLMATMVEKKTKVVHAAMLFAPESMLVDEGPLPSVDGYYMKKNGKIYFGFEKDPSFSYIHDWEEYKKYLLGKPVSYQGNVFYFEPWQVRGDTMLFSIYRIAGVPRRSLSSQEYYRRIYISRWENMVVVPIFDLVESTRELVKKDLFVEKQFMDKCLDYIARLSDQQLTISNVKSYLSSNNWVLFINGAAVKNKQSVDSRDLQLLAQTLLVKEQVARPVMRELREAILTETKPITSLTDVLGLISRKLWKQFANKIAVGGFVGMVGTLIGFYPKKVLTWAKDTPNGPELCYENSHKTKVIVFLSVVYAIGGITLMRRDIRDGLVKKLCDMFDIKRGAHVLDVENPCRYYEINDFFSSLYSASESGETVLPDLSEVKAKSDKLLQQKKEIADEFLSAKFSNYSGSSVRTSPPSVVGSSRSGLGLLLEDSNVLTQARVGVSRKVDDEEIMEQFLSGLIDTEAEIDEVVSAFSAECERGETSGTKVLCKPLTPPGFENVLPAVKPLVSKGKTVKRVDYFQVMGGERLPKRPVVSGDNSVDARREFLYYLDAERVAQNDEIMSLYRDYSRGVIRTGGQNYPHGLGVWDVEMKNWCIRPVVTEHAYVFQPDKRMDDWSGYLEVAVWERGMLVNDFAVERMSDYVIVCDQTYLCNNRLILDNLSALDLGPVNCSFELVDGVPGCGKSTMIVNSANPCVDVVLSTGRAATDDLIERFASKGFPCKLKRRVKTVDSFLMHCVDGSLTGDVLHFDEALMAHAGMVYFCAQIAGAKRCICQGDQNQISFKPRVSQVDLRFSSLVGKFDIVTEKRETYRSPADVAAVLNKYYTGDVRTHNATANSMTVRKIVSKEQVSLKPGAQYITFLQSEKKELVNLLALRKVAAKVSTVHESQGETFKDVVLVRTKPTDDSIARGREYLIVALSRHTQSLVYETVKEDDVSKEIRESAALTKAALARFFVTETVLXRFRSRFDVFRHHEGPCAVPDSGTITDLEMWYDALFPGNSLRDSSLDGYLVATTDCNLRLDNVTIKSGNWKDKFAEKETFLKPVIRTAMPDKRKTTQLESLLALQKRNQAAPDLQENVHATVLIEETMKKLKSVVYDVGKIRADPIVNRAQMERWWRNQSTAVQAKVVADVRELHEIDYSSYMYMIKSDVKPKTDLTPQFEYSALQTVVYHEKLINSLFGPIFKEINERKLDAMQPHFVFNTRMTSSDLNDRVKFLNTEAAYDFVEIDMSKFDKSANRFHLQLQLEIYRLFGLDEWAAFLWEVSHTQTTVRDIQNGMMAHIWYQQKSGDADTYNANSDRTLCALLSELPLEKAVMVTYGGDDSLIAFPRGTQFVDPCPKLATKWNFECKIFKYDVPMFCGKFLLKTSSCYEFVPDPVKVLTKLGKKSIKDVQHLAEIYISLNDSNRALGNYMVVSKLSESVSDRYLYKGDSVHALCALWKHIKSFTALCTLFRDENDKELNPAKVDWKKAQRAVSNFYDW.

The interval 65–425 (HEVLSQKEQN…INGAAVKNKQ (361 aa)) is methyltransferase. The Alphavirus-like MT domain maps to 86 to 300 (VFKDDKNMVH…HDWEEYKKYL (215 aa)). A coiled-coil region spans residues 601–622 (DLSEVKAKSDKLLQQKKEIADE). The region spanning 872–1033 (CDQTYLCNNR…VGKFDIVTEK (162 aa)) is the (+)RNA virus helicase ATP-binding domain. A helicase region spans residues 901–1155 (LVDGVPGCGK…SRHTQSLVYE (255 aa)). The (+)RNA virus helicase C-terminal domain occupies 1034–1187 (RETYRSPADV…ARFFVTETVL (154 aa)). Residues 1449–1562 (YDFVEIDMSK…AFPRGTQFVD (114 aa)) form the RdRp catalytic domain.

It belongs to the ssRNA positive-strand viruses RNA-directed RNA polymerase family. In terms of assembly, heterodimer of a large and a small subunit.

The enzyme catalyses ATP + H2O = ADP + phosphate + H(+). The catalysed reaction is RNA(n) + a ribonucleoside 5'-triphosphate = RNA(n+1) + diphosphate. Is an RNA-dependent RNA polymerase active in viral RNA replication. Functionally, is a methyltransferase active in RNA capping and an RNA helicase. Methyltransferase displays a cytoplasmic capping enzyme activity. This function is necessary since all viral RNAs are synthesized in the cytoplasm, and host capping enzymes are restricted to the nucleus. Helicase region probably exhibits NTPase and RNA unwinding activities (Potential). This is Replicase large subunit from Beta vulgaris (Sugar beet).